Reading from the N-terminus, the 80-residue chain is Kappa-actitoxin-Avd4i (80 aa).

The N-terminal stretch at 1-19 (MNKALFLCLVVLCAAVVFA) is a signal peptide. A propeptide spanning residues 20–31 (AEDLQKAKHAPF) is cleaved from the precursor. Cystine bridges form between Cys-41–Cys-76, Cys-43–Cys-69, and Cys-59–Cys-77.

Belongs to the sea anemone type 3 (BDS) potassium channel toxin family. As to expression, weakly expressed in the ectodermal tissue from the distal and proximal tentacles, body wall, and oral disk.

Its subcellular location is the secreted. The protein resides in the nematocyst. In terms of biological role, blocks Kv3 voltage-gated potassium channels. Reduces blood pressure. This is Kappa-actitoxin-Avd4i from Anemonia viridis (Snakelocks anemone).